We begin with the raw amino-acid sequence, 458 residues long: UDP-N-acetylmuramoylalanine--D-glutamate ligase (458 aa).

An ATP-binding site is contributed by 118–124; sequence GTNGKTT.

This sequence belongs to the MurCDEF family.

The protein localises to the cytoplasm. It catalyses the reaction UDP-N-acetyl-alpha-D-muramoyl-L-alanine + D-glutamate + ATP = UDP-N-acetyl-alpha-D-muramoyl-L-alanyl-D-glutamate + ADP + phosphate + H(+). It functions in the pathway cell wall biogenesis; peptidoglycan biosynthesis. Cell wall formation. Catalyzes the addition of glutamate to the nucleotide precursor UDP-N-acetylmuramoyl-L-alanine (UMA). The protein is UDP-N-acetylmuramoylalanine--D-glutamate ligase of Ligilactobacillus salivarius (strain UCC118) (Lactobacillus salivarius).